The sequence spans 226 residues: Pyridoxal 5'-phosphate synthase subunit Pdx2 (226 aa).

52-54 (GES) serves as a coordination point for L-glutamine. The Nucleophile role is filled by C87. Residues R124 and 156–157 (IR) each bind L-glutamine. Active-site charge relay system residues include H199 and E201.

Belongs to the glutaminase PdxT/SNO family. In the presence of PdxS, forms a dodecamer of heterodimers. Only shows activity in the heterodimer.

The catalysed reaction is aldehydo-D-ribose 5-phosphate + D-glyceraldehyde 3-phosphate + L-glutamine = pyridoxal 5'-phosphate + L-glutamate + phosphate + 3 H2O + H(+). It carries out the reaction L-glutamine + H2O = L-glutamate + NH4(+). The protein operates within cofactor biosynthesis; pyridoxal 5'-phosphate biosynthesis. Catalyzes the hydrolysis of glutamine to glutamate and ammonia as part of the biosynthesis of pyridoxal 5'-phosphate. The resulting ammonia molecule is channeled to the active site of PdxS. The sequence is that of Pyridoxal 5'-phosphate synthase subunit Pdx2 from Plasmodium berghei.